The following is an 81-amino-acid chain: Small cysteine-rich protein 1 2 (81 aa).

An N-terminal signal peptide occupies residues 1–19 (MGVNFNICLLLLLVATISS). The propeptide occupies 20–39 (QPLKATEKDDSTDENPFGIY).

The protein belongs to the Cnidaria small cysteine-rich protein (SCRiP) family. alpha subfamily. The basic myotoxic domain of rattlesnake crotamine toxins (with 6 Cys residues) has been detected in this protein. However, this protein contains 2 additional Cys at the C-terminal region. Hence, this protein may contain 4 disulfide bonds instead of the 3 suggested by the myotoxin domain.

Its subcellular location is the secreted. It is found in the nematocyst. Induces neurotoxic symptoms on zebrafish. Has also been claimed to be implied in calcification, but tests on homolog proteins suggest that proteins of this family have a neurotoxic function and not a calcification function. The chain is Small cysteine-rich protein 1 2 from Montipora capitata (Rice coral).